The chain runs to 867 residues: Leucine--tRNA ligase (867 aa).

The short motif at 57-67 is the 'HIGH' region element; sequence PYPSGTLHMGH. A disordered region spans residues 308–327; it reads SQDERTSDDQPKRGVPTGAV. Residues 309 to 319 are compositionally biased toward basic and acidic residues; the sequence is QDERTSDDQPK. The 'KMSKS' region motif lies at 631 to 635; the sequence is KMSKS. Residue K634 coordinates ATP.

The protein belongs to the class-I aminoacyl-tRNA synthetase family.

It localises to the cytoplasm. The enzyme catalyses tRNA(Leu) + L-leucine + ATP = L-leucyl-tRNA(Leu) + AMP + diphosphate. The polypeptide is Leucine--tRNA ligase (Synechococcus sp. (strain CC9311)).